We begin with the raw amino-acid sequence, 303 residues long: Glutathione transport system permease protein GsiD (303 aa).

The next 6 membrane-spanning stretches (helical) occupy residues 40-60, 105-125, 144-164, 165-185, 222-242, and 266-286; these read AMTA…ARWI, LAAG…LGLL, LFAF…GSGI, ANVI…LVRG, IVVF…SLSF, and VIAP…VLAF. In terms of domain architecture, ABC transmembrane type-1 spans 101 to 290; it reads AQISLAAGVF…LTVLAFNLLG (190 aa).

Belongs to the binding-protein-dependent transport system permease family. The complex is composed of two ATP-binding proteins (GsiA), two transmembrane proteins (GsiC and GsiD) and a solute-binding protein (GsiB).

The protein localises to the cell inner membrane. In terms of biological role, part of the ABC transporter complex GsiABCD involved in glutathione import. Probably responsible for the translocation of the substrate across the membrane. In Shigella dysenteriae serotype 1 (strain Sd197), this protein is Glutathione transport system permease protein GsiD.